Here is a 124-residue protein sequence, read N- to C-terminus: Large ribosomal subunit protein bL12 (124 aa).

Belongs to the bacterial ribosomal protein bL12 family. In terms of assembly, homodimer. Part of the ribosomal stalk of the 50S ribosomal subunit. Forms a multimeric L10(L12)X complex, where L10 forms an elongated spine to which 2 to 4 L12 dimers bind in a sequential fashion. Binds GTP-bound translation factors.

Functionally, forms part of the ribosomal stalk which helps the ribosome interact with GTP-bound translation factors. Is thus essential for accurate translation. The sequence is that of Large ribosomal subunit protein bL12 from Dehalococcoides mccartyi (strain ATCC BAA-2266 / KCTC 15142 / 195) (Dehalococcoides ethenogenes (strain 195)).